A 135-amino-acid chain; its full sequence is Small ribosomal subunit protein uS9 (135 aa).

The segment covering 108–118 has biased composition (basic and acidic residues); it reads VGDPRRTEPHK. The disordered stretch occupies residues 108-135; sequence VGDPRRTEPHKPNRSTKGPRAKRQKSYR. A compositionally biased stretch (basic residues) spans 119–135; sequence PNRSTKGPRAKRQKSYR.

This sequence belongs to the universal ribosomal protein uS9 family.

In Pyrococcus abyssi (strain GE5 / Orsay), this protein is Small ribosomal subunit protein uS9 (rps9).